We begin with the raw amino-acid sequence, 358 residues long: Alanine racemase (358 aa).

Lysine 35 functions as the Proton acceptor; specific for D-alanine in the catalytic mechanism. Lysine 35 is modified (N6-(pyridoxal phosphate)lysine). Arginine 130 lines the substrate pocket. Tyrosine 255 functions as the Proton acceptor; specific for L-alanine in the catalytic mechanism. Residue methionine 303 coordinates substrate.

The protein belongs to the alanine racemase family. Pyridoxal 5'-phosphate is required as a cofactor.

The catalysed reaction is L-alanine = D-alanine. Its pathway is amino-acid biosynthesis; D-alanine biosynthesis; D-alanine from L-alanine: step 1/1. Functionally, catalyzes the interconversion of L-alanine and D-alanine. May also act on other amino acids. The sequence is that of Alanine racemase (alr) from Shewanella sediminis (strain HAW-EB3).